A 65-amino-acid chain; its full sequence is Large ribosomal subunit protein bL35 (65 aa).

The protein belongs to the bacterial ribosomal protein bL35 family.

The polypeptide is Large ribosomal subunit protein bL35 (Thermoanaerobacter sp. (strain X514)).